The chain runs to 496 residues: Glycerol kinase (496 aa).

Threonine 12 serves as a coordination point for ADP. Residues threonine 12, threonine 13, and serine 14 each contribute to the ATP site. Threonine 12 provides a ligand contact to sn-glycerol 3-phosphate. Arginine 16 is a binding site for ADP. Sn-glycerol 3-phosphate contacts are provided by arginine 82, glutamate 83, and tyrosine 134. Residues arginine 82, glutamate 83, and tyrosine 134 each coordinate glycerol. Histidine 230 carries the phosphohistidine; by HPr modification. Aspartate 244 is a binding site for sn-glycerol 3-phosphate. Residues aspartate 244 and glutamine 245 each coordinate glycerol. 2 residues coordinate ADP: threonine 266 and glycine 309. Residues threonine 266, glycine 309, glutamine 313, and glycine 410 each contribute to the ATP site. ADP-binding residues include glycine 410 and asparagine 414.

It belongs to the FGGY kinase family. As to quaternary structure, homotetramer and homodimer (in equilibrium). Post-translationally, the phosphoenolpyruvate-dependent sugar phosphotransferase system (PTS), including enzyme I, and histidine-containing protein (HPr) are required for the phosphorylation, which leads to the activation of the enzyme.

It carries out the reaction glycerol + ATP = sn-glycerol 3-phosphate + ADP + H(+). The protein operates within polyol metabolism; glycerol degradation via glycerol kinase pathway; sn-glycerol 3-phosphate from glycerol: step 1/1. Activated by phosphorylation and inhibited by fructose 1,6-bisphosphate (FBP). Key enzyme in the regulation of glycerol uptake and metabolism. Catalyzes the phosphorylation of glycerol to yield sn-glycerol 3-phosphate. The polypeptide is Glycerol kinase (Bacillus thuringiensis subsp. konkukian (strain 97-27)).